Consider the following 341-residue polypeptide: DNA-directed RNA polymerase subunit alpha (341 aa).

Residues 1 to 223 are alpha N-terminal domain (alpha-NTD); the sequence is MEQKRPQLKA…DELSVFGNVE (223 aa). The interval 268-341 is alpha C-terminal domain (alpha-CTD); it reads PQPFPTDQDT…LAQFGLALRD (74 aa).

Belongs to the RNA polymerase alpha chain family. Homodimer. The RNAP catalytic core consists of 2 alpha, 1 beta, 1 beta' and 1 omega subunit. When a sigma factor is associated with the core the holoenzyme is formed, which can initiate transcription.

The enzyme catalyses RNA(n) + a ribonucleoside 5'-triphosphate = RNA(n+1) + diphosphate. DNA-dependent RNA polymerase catalyzes the transcription of DNA into RNA using the four ribonucleoside triphosphates as substrates. This is DNA-directed RNA polymerase subunit alpha from Deinococcus radiodurans (strain ATCC 13939 / DSM 20539 / JCM 16871 / CCUG 27074 / LMG 4051 / NBRC 15346 / NCIMB 9279 / VKM B-1422 / R1).